Reading from the N-terminus, the 175-residue chain is ATP-dependent protease subunit HslV (175 aa).

Residue T2 is part of the active site. The Na(+) site is built by G158, C161, and T164.

It belongs to the peptidase T1B family. HslV subfamily. As to quaternary structure, a double ring-shaped homohexamer of HslV is capped on each side by a ring-shaped HslU homohexamer. The assembly of the HslU/HslV complex is dependent on binding of ATP.

Its subcellular location is the cytoplasm. The catalysed reaction is ATP-dependent cleavage of peptide bonds with broad specificity.. Allosterically activated by HslU binding. Its function is as follows. Protease subunit of a proteasome-like degradation complex believed to be a general protein degrading machinery. The chain is ATP-dependent protease subunit HslV from Haemophilus influenzae (strain PittEE).